The sequence spans 418 residues: Ceramide synthase LAC1 (418 aa).

The span at 1 to 14 (MSTIKPSPSNNNLK) shows a compositional bias: polar residues. The disordered stretch occupies residues 1–25 (MSTIKPSPSNNNLKVRSRPRRKSSI). Serine 2 carries the N-acetylserine modification. At 2-81 (STIKPSPSNN…WFSFREISYR (80 aa)) the chain is on the cytoplasmic side. The span at 15 to 24 (VRSRPRRKSS) shows a compositional bias: basic residues. Phosphoserine occurs at positions 23 and 24. Residues 82–102 (HAWIAPLMILIAVYSAYFTSG) traverse the membrane as a helical segment. N-linked (GlcNAc...) asparagine glycosylation occurs at asparagine 103. Topologically, residues 103–130 (NTTKTNVLHRFVAVSYQIGDTNAYGKGI) are lumenal. A helical membrane pass occupies residues 131 to 155 (NDLCFVFYYMIFFTFLREFLMDVVI). Residues 156–172 (RPFAIRLHVTSKHRIKR) are Cytoplasmic-facing. The TLC domain occupies 168 to 385 (HRIKRIMEQM…FRVLYRILWR (218 aa)). 3 residues coordinate fumonisin B1: arginine 169, arginine 172, and tyrosine 182. A helical transmembrane segment spans residues 173–194 (IMEQMYAIFYTGVSGPFGIYCM). Residues 195-217 (YHSDLWFFNTKAMYRTYPDFTNP) lie on the Lumenal side of the membrane. A helical membrane pass occupies residues 218 to 240 (FLFKVFYLGQAAFWAQQACILVL). Residues tyrosine 224 and tryptophan 231 each contribute to the hexacosanoate site. Position 231 (tryptophan 231) interacts with fumonisin B1. A hexacosanoyl-CoA-binding site is contributed by tryptophan 231. Over 241–249 (QLEKPRKDH) the chain is Cytoplasmic. A helical membrane pass occupies residues 250 to 268 (NELTFHHIVTLLLIWSSYV). Fumonisin B1 is bound at residue histidine 255. Residues histidine 255, threonine 259, leucine 262, isoleucine 263, serine 265, serine 266, phenylalanine 269, phenylalanine 271, methionine 274, glycine 275, isoleucine 278, tyrosine 279, methionine 282, aspartate 283, and aspartate 286 each contribute to the hexacosanoate site. Positions 255, 259, and 262 each coordinate hexacosanoyl-CoA. Serine 265 and serine 266 together coordinate hexacosanoyl-CoA. Topologically, residues 269–273 (FHFTK) are lumenal. Hexacosanoyl-CoA contacts are provided by phenylalanine 271, methionine 274, glycine 275, isoleucine 278, tyrosine 279, and methionine 282. The chain crosses the membrane as a helical span at residues 274-295 (MGLPIYITMDVSDFLLSFSKTL). 9 residues coordinate fumonisin B1: aspartate 286, leucine 289, lysine 293, asparagine 296, tyrosine 297, alanine 303, phenylalanine 304, phenylalanine 307, and tryptophan 314. Hexacosanoyl-CoA-binding residues include aspartate 286, leucine 289, lysine 293, and asparagine 296. At 296–305 (NYLDSGLAFF) the chain is on the cytoplasmic side. The chain crosses the membrane as a helical span at residues 306-334 (SFAIFVVAWIYLRHYINLKILWSVLTQFR). Residue phenylalanine 307 participates in hexacosanoyl-CoA binding. Residues arginine 318, phenylalanine 343, tyrosine 348, isoleucine 352, serine 353, isoleucine 356, valine 357, leucine 360, isoleucine 361, and tryptophan 371 each contribute to the hexacosanoate site. A hexacosanoyl-CoA-binding site is contributed by arginine 318. At 335–353 (TEGNYVLNFATQQYKCWIS) the chain is on the lumenal side. Residues tyrosine 348, isoleucine 352, serine 353, isoleucine 356, valine 357, and leucine 360 each coordinate hexacosanoyl-CoA. The helical transmembrane segment at 354–382 (LPIVFVLIGALQLVNLYWLFLIFRVLYRI) threads the bilayer. Tryptophan 371, isoleucine 375, valine 378, isoleucine 382, and arginine 385 together coordinate fumonisin B1. Tryptophan 371 lines the hexacosanoyl-CoA pocket. At 383–418 (LWRGILKDDRSDSESDEESDESSTTPTDSTPTKKDI) the chain is on the cytoplasmic side. The segment at 390 to 418 (DDRSDSESDEESDESSTTPTDSTPTKKDI) is disordered.

It belongs to the sphingosine N-acyltransferase family. Component of the ceramide synthase complex composed of at least LAC1, LAG1 and LIP1. Forms a heterotetrameric complex, where one unit of the LIP1 homodimer interacts with LAC1 and the other with either LAC1 or LAG1. Post-translationally, phosphorylated; phosphorylation is induced upon disruption of sphingolipid synthesis. Phosphorylation is inhibited by exogenous addition of phytosphingosine.

Its subcellular location is the endoplasmic reticulum membrane. The enzyme catalyses a very long-chain fatty acyl-CoA + a sphingoid base = an N-(very-long-chain fatty acyl)-sphingoid base + CoA + H(+). It catalyses the reaction hexacosanoyl-CoA + sphinganine = N-hexacosanoylsphinganine + CoA + H(+). The catalysed reaction is eicosanoyl-CoA + sphinganine = N-eicosanoylsphinganine + CoA + H(+). It carries out the reaction a fatty acyl-CoA + sphinganine = an N-acylsphinganine + CoA + H(+). The enzyme catalyses (4R)-hydroxysphinganine + a fatty acyl-CoA = an N-acyl-(4R)-4-hydroxysphinganine + CoA + H(+). The protein operates within lipid metabolism; sphingolipid metabolism. Its activity is regulated as follows. As part of the ceramide synthase complex, inhibited by the sphinganine analog mycotoxin, fumonisin B1 (FB1). Activated by ACB1, as part of the ceramide synthase complex. Functionally, component of the ceramide synthase complex that catalyzes the transfer of the acyl chain from acyl-CoA to a sphingoid base, with high selectivity toward hexacosanoyl-CoA (C26:0-CoA). N-acylates sphinganine and phytosphingosine bases to form dihydroceramides and phytoceramides, respectively. Redundant with LAG1. Facilitates ER-to-Golgi transport of GPI-anchored proteins. Has a lower affinity for phytosphingosine (PHS) than dihydrosphingosine (DHS); PHS is required for the synthesis of phytoceramides and the formation of nuclear envelopes. Along with LAG1, plays a role in pheromone-induced MAP kinase-activation of mating and formation of diploid cells. May also play a role, together with LAG1, in the polarized membrane distribution of phosphatidylinositol 4,5 biphosphate required for STE5 localization to the plasma membrane. This Saccharomyces cerevisiae (strain ATCC 204508 / S288c) (Baker's yeast) protein is Ceramide synthase LAC1 (LAC1).